Consider the following 337-residue polypeptide: S-adenosylmethionine:tRNA ribosyltransferase-isomerase (337 aa).

It belongs to the QueA family. As to quaternary structure, monomer.

The protein localises to the cytoplasm. It catalyses the reaction 7-aminomethyl-7-carbaguanosine(34) in tRNA + S-adenosyl-L-methionine = epoxyqueuosine(34) in tRNA + adenine + L-methionine + 2 H(+). The protein operates within tRNA modification; tRNA-queuosine biosynthesis. In terms of biological role, transfers and isomerizes the ribose moiety from AdoMet to the 7-aminomethyl group of 7-deazaguanine (preQ1-tRNA) to give epoxyqueuosine (oQ-tRNA). In Legionella pneumophila (strain Lens), this protein is S-adenosylmethionine:tRNA ribosyltransferase-isomerase.